The sequence spans 401 residues: Glutamyl-tRNA reductase (401 aa).

Substrate is bound by residues 45-48 (TCNR), Ser-101, 106-108 (EDQ), and Gln-112. Cys-46 (nucleophile) is an active-site residue. 177–182 (GYGDVG) is a binding site for NADP(+).

This sequence belongs to the glutamyl-tRNA reductase family. In terms of assembly, homodimer.

The catalysed reaction is (S)-4-amino-5-oxopentanoate + tRNA(Glu) + NADP(+) = L-glutamyl-tRNA(Glu) + NADPH + H(+). It functions in the pathway porphyrin-containing compound metabolism; protoporphyrin-IX biosynthesis; 5-aminolevulinate from L-glutamyl-tRNA(Glu): step 1/2. Functionally, catalyzes the NADPH-dependent reduction of glutamyl-tRNA(Glu) to glutamate 1-semialdehyde (GSA). This chain is Glutamyl-tRNA reductase, found in Clostridium botulinum (strain Eklund 17B / Type B).